Consider the following 217-residue polypeptide: tRNA (guanine-N(7)-)-methyltransferase (217 aa).

Glu44, Glu69, Asp96, and Asp118 together coordinate S-adenosyl-L-methionine. Asp118 is a catalytic residue. Substrate is bound by residues Lys122, Asp154, and 191–194; that span reads TEYE.

This sequence belongs to the class I-like SAM-binding methyltransferase superfamily. TrmB family.

It carries out the reaction guanosine(46) in tRNA + S-adenosyl-L-methionine = N(7)-methylguanosine(46) in tRNA + S-adenosyl-L-homocysteine. It functions in the pathway tRNA modification; N(7)-methylguanine-tRNA biosynthesis. Catalyzes the formation of N(7)-methylguanine at position 46 (m7G46) in tRNA. The chain is tRNA (guanine-N(7)-)-methyltransferase from Bacillus cytotoxicus (strain DSM 22905 / CIP 110041 / 391-98 / NVH 391-98).